Consider the following 394-residue polypeptide: NAD(P)H-quinone oxidoreductase subunit H (394 aa).

This sequence belongs to the complex I 49 kDa subunit family. In terms of assembly, NDH-1 can be composed of about 15 different subunits; different subcomplexes with different compositions have been identified which probably have different functions.

The protein resides in the cellular thylakoid membrane. It carries out the reaction a plastoquinone + NADH + (n+1) H(+)(in) = a plastoquinol + NAD(+) + n H(+)(out). It catalyses the reaction a plastoquinone + NADPH + (n+1) H(+)(in) = a plastoquinol + NADP(+) + n H(+)(out). In terms of biological role, NDH-1 shuttles electrons from an unknown electron donor, via FMN and iron-sulfur (Fe-S) centers, to quinones in the respiratory and/or the photosynthetic chain. The immediate electron acceptor for the enzyme in this species is believed to be plastoquinone. Couples the redox reaction to proton translocation, and thus conserves the redox energy in a proton gradient. Cyanobacterial NDH-1 also plays a role in inorganic carbon-concentration. The sequence is that of NAD(P)H-quinone oxidoreductase subunit H from Prochlorococcus marinus (strain MIT 9313).